The primary structure comprises 401 residues: Tryptophan synthase beta chain (401 aa).

Lys-88 bears the N6-(pyridoxal phosphate)lysine mark.

Belongs to the TrpB family. In terms of assembly, tetramer of two alpha and two beta chains. The cofactor is pyridoxal 5'-phosphate.

It carries out the reaction (1S,2R)-1-C-(indol-3-yl)glycerol 3-phosphate + L-serine = D-glyceraldehyde 3-phosphate + L-tryptophan + H2O. The protein operates within amino-acid biosynthesis; L-tryptophan biosynthesis; L-tryptophan from chorismate: step 5/5. In terms of biological role, the beta subunit is responsible for the synthesis of L-tryptophan from indole and L-serine. The sequence is that of Tryptophan synthase beta chain from Shewanella denitrificans (strain OS217 / ATCC BAA-1090 / DSM 15013).